Consider the following 440-residue polypeptide: Xylose isomerase (440 aa).

Active-site residues include histidine 101 and aspartate 104. Mg(2+) is bound by residues glutamate 232, glutamate 268, histidine 271, aspartate 296, aspartate 307, aspartate 309, and aspartate 339.

This sequence belongs to the xylose isomerase family. As to quaternary structure, homotetramer. Mg(2+) serves as cofactor.

The protein resides in the cytoplasm. The catalysed reaction is alpha-D-xylose = alpha-D-xylulofuranose. The sequence is that of Xylose isomerase from Escherichia fergusonii (strain ATCC 35469 / DSM 13698 / CCUG 18766 / IAM 14443 / JCM 21226 / LMG 7866 / NBRC 102419 / NCTC 12128 / CDC 0568-73).